A 184-amino-acid chain; its full sequence is GTP cyclohydrolase 1 (184 aa).

Positions 75, 78, and 146 each coordinate Zn(2+).

This sequence belongs to the GTP cyclohydrolase I family. As to quaternary structure, homomer.

It carries out the reaction GTP + H2O = 7,8-dihydroneopterin 3'-triphosphate + formate + H(+). Its pathway is cofactor biosynthesis; 7,8-dihydroneopterin triphosphate biosynthesis; 7,8-dihydroneopterin triphosphate from GTP: step 1/1. This is GTP cyclohydrolase 1 from Teredinibacter turnerae (strain ATCC 39867 / T7901).